We begin with the raw amino-acid sequence, 521 residues long: CDP-diacylglycerol--glycerol-3-phosphate 3-phosphatidyltransferase (521 aa).

Residue 91 to 98 (ASLYLGKS) coordinates ATP. 2 PLD phosphodiesterase domains span residues 177 to 203 (GLGL…SNDY) and 419 to 457 (NGWS…TRRA). Residues His-182, Lys-184, and Asp-189 contribute to the active site.

Belongs to the CDP-alcohol phosphatidyltransferase class-II family.

It is found in the mitochondrion. It catalyses the reaction a CDP-1,2-diacyl-sn-glycerol + sn-glycerol 3-phosphate = a 1,2-diacyl-sn-glycero-3-phospho-(1'-sn-glycero-3'-phosphate) + CMP + H(+). Its pathway is phospholipid metabolism; phosphatidylglycerol biosynthesis; phosphatidylglycerol from CDP-diacylglycerol: step 1/2. In terms of biological role, essential for the viability of mitochondrial petite mutant. Catalyzes the committed step to the synthesis of the acidic phospholipids. The chain is CDP-diacylglycerol--glycerol-3-phosphate 3-phosphatidyltransferase (PGS1) from Saccharomyces pastorianus (Lager yeast).